The primary structure comprises 347 residues: NADH-ubiquinone oxidoreductase chain 2 (347 aa).

The next 11 membrane-spanning stretches (helical) occupy residues P3 to T23, H25 to M45, Y59 to V79, I96 to P116, V122 to L142, I149 to G169, I178 to P198, M200 to M220, L240 to F260, M276 to L296, and L326 to L346.

It belongs to the complex I subunit 2 family. As to quaternary structure, core subunit of respiratory chain NADH dehydrogenase (Complex I) which is composed of 45 different subunits. Interacts with TMEM242.

It localises to the mitochondrion inner membrane. It carries out the reaction a ubiquinone + NADH + 5 H(+)(in) = a ubiquinol + NAD(+) + 4 H(+)(out). Its function is as follows. Core subunit of the mitochondrial membrane respiratory chain NADH dehydrogenase (Complex I) which catalyzes electron transfer from NADH through the respiratory chain, using ubiquinone as an electron acceptor. Essential for the catalytic activity and assembly of complex I. In Nyctimene albiventer (Common tube-nosed fruit bat), this protein is NADH-ubiquinone oxidoreductase chain 2.